A 59-amino-acid polypeptide reads, in one-letter code: MKTIKITQIKSSIGRIPDHKKTLLGLGLRHIGHSVIRQDTPSIRGMIKKISYILKIQEE.

Belongs to the universal ribosomal protein uL30 family. In terms of assembly, part of the 50S ribosomal subunit.

This chain is Large ribosomal subunit protein uL30, found in Buchnera aphidicola subsp. Schizaphis graminum (strain Sg).